We begin with the raw amino-acid sequence, 736 residues long: Oxysterol-binding protein-related protein 9 (736 aa).

N-acetylalanine is present on Ala-2. The PH domain maps to Ala-2–Leu-99. The tract at residues Leu-209 to Val-368 is disordered. Over residues Thr-253–Ser-274 the composition is skewed to low complexity. Ser-306, Ser-324, Ser-325, Ser-326, and Ser-329 each carry phosphoserine. Composition is skewed to polar residues over residues Ser-314 to Ser-329 and Thr-336 to Ser-348. Ser-611 carries the post-translational modification Phosphoserine.

The protein belongs to the OSBP family. As to quaternary structure, heterodimer with OSBPL11. Interacts with OSBPL10.

The protein localises to the late endosome membrane. Its subcellular location is the golgi apparatus. It localises to the trans-Golgi network membrane. It catalyses the reaction a 1,2-diacyl-sn-glycero-3-phospho-(1D-myo-inositol 4-phosphate)(out) + a 1,2-diacyl-sn-glycero-3-phospho-L-serine(in) = a 1,2-diacyl-sn-glycero-3-phospho-(1D-myo-inositol 4-phosphate)(in) + a 1,2-diacyl-sn-glycero-3-phospho-L-serine(out). Its function is as follows. Interacts with OSBPL11 to function as lipid transfer proteins. Together they form a heterodimer that localizes at the ER-trans-Golgi membrane contact sites, and exchanges phosphatidylserine (1,2-diacyl-sn-glycero-3-phospho-L-serine, PS) for phosphatidylinositol-4-phosphate (1,2-diacyl-sn-glycero-3-phospho-(1D-myo-inositol 4-phosphate), PI(4)P) between the two organelles, a step that is critical for sphingomyelin synthesis in the Golgi complex. The polypeptide is Oxysterol-binding protein-related protein 9 (Osbpl9) (Mus musculus (Mouse)).